A 120-amino-acid polypeptide reads, in one-letter code: Response regulator receiver protein CpdR (120 aa).

In terms of domain architecture, Response regulatory spans 3–117 (RILLAEDDND…DLVNEIEKML (115 aa)). Asp-52 is subject to 4-aspartylphosphate.

Is phosphorylated by ChpT-P on Asp-52.

It localises to the cytoplasm. In terms of biological role, component of a regulatory phosphorelay system that controls B.abortus cell growth, division, and intracellular survival inside mammalian host cells. This signaling pathway is composed of CckA, ChpT, CtrA and CpdR. CpdR is a response regulator substrate of ChpT. Unphosphorylated CpdR controls steady-state levels of CtrA in the B.abortus cell, likely via CtrA destabilization and activation of its proteolysis. The protein is Response regulator receiver protein CpdR of Brucella abortus (strain 2308).